The chain runs to 873 residues: Alanine--tRNA ligase (873 aa).

4 residues coordinate Zn(2+): His562, His566, Cys664, and His668.

It belongs to the class-II aminoacyl-tRNA synthetase family. Requires Zn(2+) as cofactor.

It is found in the cytoplasm. It carries out the reaction tRNA(Ala) + L-alanine + ATP = L-alanyl-tRNA(Ala) + AMP + diphosphate. Its function is as follows. Catalyzes the attachment of alanine to tRNA(Ala) in a two-step reaction: alanine is first activated by ATP to form Ala-AMP and then transferred to the acceptor end of tRNA(Ala). Also edits incorrectly charged Ser-tRNA(Ala) and Gly-tRNA(Ala) via its editing domain. In Shewanella amazonensis (strain ATCC BAA-1098 / SB2B), this protein is Alanine--tRNA ligase.